Here is a 120-residue protein sequence, read N- to C-terminus: Small ribosomal subunit protein eS24 (120 aa).

The segment at 101–120 is disordered; sequence RDAGTKQKKGGSKGGQGAKG.

It belongs to the eukaryotic ribosomal protein eS24 family.

This chain is Small ribosomal subunit protein eS24, found in Saccharolobus islandicus (strain Y.N.15.51 / Yellowstone #2) (Sulfolobus islandicus).